We begin with the raw amino-acid sequence, 309 residues long: Foldase protein PrsA (309 aa).

Residues 1-22 (MKTRSKLAAGFLTLMSVATLAA) form the signal peptide. Cys-23 carries N-palmitoyl cysteine lipidation. Cys-23 carries S-diacylglycerol cysteine lipidation. Residues 146-241 (TPETSVQVIK…TSYYIIKVTD (96 aa)) form the PpiC domain.

This sequence belongs to the PrsA family.

The protein localises to the cell membrane. It carries out the reaction [protein]-peptidylproline (omega=180) = [protein]-peptidylproline (omega=0). Plays a major role in protein secretion by helping the post-translocational extracellular folding of several secreted proteins. The chain is Foldase protein PrsA from Streptococcus agalactiae serotype Ia (strain ATCC 27591 / A909 / CDC SS700).